The chain runs to 681 residues: Sodium-dependent phosphate transporter 1 (681 aa).

A run of 6 helical transmembrane segments spans residues 25-45 (YLWM…SVGA), 66-86 (ACIL…AKVS), 106-126 (LMAG…VASF), 162-182 (IVMS…ILFF), 207-227 (ACTV…LLGF), and 234-254 (GTIL…WFFV). Phosphoserine occurs at positions 269 and 273. Positions 269 to 296 (SPSESPLMEKKNSLKEDHEETKLSVSDI) are disordered. Positions 275–290 (LMEKKNSLKEDHEETK) are enriched in basic and acidic residues. 4 helical membrane-spanning segments follow: residues 515–535 (VSLL…FAHG), 562–582 (VATP…GLWV), 604–624 (FSIE…GLPI), and 654–674 (IFMA…AIMA). Residues 554–562 (DTGDVSSKV) form an a region.

It belongs to the inorganic phosphate transporter (PiT) (TC 2.A.20) family.

It localises to the cell membrane. It carries out the reaction 2 Na(+)(out) + phosphate(out) = 2 Na(+)(in) + phosphate(in). In terms of biological role, sodium-phosphate symporter which preferentially transports the monovalent form of phosphate with a stoichiometry of two sodium ions per phosphate ion. May play a role in extracellular matrix and cartilage calcification as well as in vascular calcification. Essential for cell proliferation but this function is independent of its phosphate transporter activity. This Felis catus (Cat) protein is Sodium-dependent phosphate transporter 1 (Slc20a1).